The primary structure comprises 519 residues: Ent-kaurene oxidase (519 aa).

Residues 1–10 (MDTLLSLQAV) lie on the Chloroplast intermembrane side of the membrane. The chain crosses the membrane as a helical span at residues 11–31 (PAAAAIGGPVVAIGGITLFFI). Residues 32–519 (REYVKDQRKK…PRLRDRVCVS (488 aa)) lie on the Cytoplasmic side of the membrane. Residue Cys458 coordinates heme.

Belongs to the cytochrome P450 family. The cofactor is heme.

It localises to the plastid. It is found in the chloroplast outer membrane. The catalysed reaction is ent-kaur-16-ene + 3 reduced [NADPH--hemoprotein reductase] + 3 O2 = ent-kaur-16-en-19-oate + 3 oxidized [NADPH--hemoprotein reductase] + 4 H2O + 4 H(+). It participates in plant hormone biosynthesis; gibberellin biosynthesis. In terms of biological role, catalyzes three successive oxidations of the 4-methyl group of ent-kaurene giving kaurenoic acid, a key step in gibberellins (GAs) biosynthesis. GAs, which are involved many processes, including stem elongation, play a central role in plant development. The chain is Ent-kaurene oxidase from Salvia miltiorrhiza (Chinese sage).